The following is a 545-amino-acid chain: MTTNYIFVTGGVVSSLGKGIAAASLAAILEARGLKVTMMKLDPYINVDPGTMSPTQHGEVFVTEDGAETDLDLGHYERFIRTKMTKRNNFTAGRVYSDVLAKERRGDYLGATIQVIPHITNDIKDRVINGSQGHDVAIVEVGGTVGDIESLPFMEAIRQLAVEIGRERAMFMHLTLVPYLAAAGEVKTKPTQHSVKELLSIGIQPDILVCRSDRMIPANERKKIALFCNVPEKAVISMKDVDSIYKIPQLIKSQGLDDLVCARFGINAPEADLSEWEQVIYEEANPTGEVTIGMVGKYIELPDAYKSVNEALKHAGLKNRLSVNIKYVDSQDVETKGVEVLQGLDAILVPGGFGDRGIEGKILAAKYARENKVPYLGICLGMQVALIEYARNVAGMEGAHSTEFNKDTKYPVVGLITEWVDSEGNVEERTESSNLGGTMRLGSQLCHLAKGTKARELYGSDTIHERHRHRYEVNNNLRPQIEKAGLKVSGLSADKKLVEMIENPNHPWFVAAQFHPEFTSTPRDGHPLFSGFIKAAGENARGELK.

An amidoligase domain region spans residues 1–266; sequence MTTNYIFVTG…DDLVCARFGI (266 aa). Ser-14 is a binding site for CTP. Residue Ser-14 coordinates UTP. ATP-binding positions include 15–20 and Asp-72; that span reads SLGKGI. Mg(2+) contacts are provided by Asp-72 and Glu-140. CTP-binding positions include 147-149, 187-192, and Lys-223; these read DIE and KTKPTQ. Residues 187–192 and Lys-223 contribute to the UTP site; that span reads KTKPTQ. Residue 239–241 coordinates ATP; that stretch reads KDV. In terms of domain architecture, Glutamine amidotransferase type-1 spans 291–542; it reads TIGMVGKYIE…IKAAGENARG (252 aa). Residue Gly-352 participates in L-glutamine binding. Cys-379 functions as the Nucleophile; for glutamine hydrolysis in the catalytic mechanism. Residues 380–383, Glu-403, and Arg-470 each bind L-glutamine; that span reads LGMQ. Active-site residues include His-515 and Glu-517.

The protein belongs to the CTP synthase family. As to quaternary structure, homotetramer.

It carries out the reaction UTP + L-glutamine + ATP + H2O = CTP + L-glutamate + ADP + phosphate + 2 H(+). It catalyses the reaction L-glutamine + H2O = L-glutamate + NH4(+). The enzyme catalyses UTP + NH4(+) + ATP = CTP + ADP + phosphate + 2 H(+). It participates in pyrimidine metabolism; CTP biosynthesis via de novo pathway; CTP from UDP: step 2/2. With respect to regulation, allosterically activated by GTP, when glutamine is the substrate; GTP has no effect on the reaction when ammonia is the substrate. The allosteric effector GTP functions by stabilizing the protein conformation that binds the tetrahedral intermediate(s) formed during glutamine hydrolysis. Inhibited by the product CTP, via allosteric rather than competitive inhibition. Catalyzes the ATP-dependent amination of UTP to CTP with either L-glutamine or ammonia as the source of nitrogen. Regulates intracellular CTP levels through interactions with the four ribonucleotide triphosphates. This chain is CTP synthase, found in Vibrio vulnificus (strain CMCP6).